The following is a 307-amino-acid chain: Glycine--tRNA ligase alpha subunit (307 aa).

The protein belongs to the class-II aminoacyl-tRNA synthetase family. Tetramer of two alpha and two beta subunits.

It is found in the cytoplasm. It catalyses the reaction tRNA(Gly) + glycine + ATP = glycyl-tRNA(Gly) + AMP + diphosphate. This chain is Glycine--tRNA ligase alpha subunit (glyQ), found in Xylella fastidiosa (strain 9a5c).